The following is a 459-amino-acid chain: Bifunctional protein GlmU (459 aa).

A pyrophosphorylase region spans residues Met-1–Arg-230. UDP-N-acetyl-alpha-D-glucosamine is bound by residues Leu-9 to Gly-12, Lys-23, Gln-73, and Gly-78 to Thr-79. Asp-103 serves as a coordination point for Mg(2+). UDP-N-acetyl-alpha-D-glucosamine-binding residues include Gly-140, Glu-155, Asn-170, and Asn-228. A Mg(2+)-binding site is contributed by Asn-228. The linker stretch occupies residues Ile-231–Asn-251. An N-acetyltransferase region spans residues Gly-252–Ser-459. Arg-333 and Lys-351 together coordinate UDP-N-acetyl-alpha-D-glucosamine. The active-site Proton acceptor is the His-363. Residues Tyr-366 and Asn-377 each contribute to the UDP-N-acetyl-alpha-D-glucosamine site. Acetyl-CoA contacts are provided by residues Asn-386–Tyr-387, Ala-423, and Arg-440.

It in the N-terminal section; belongs to the N-acetylglucosamine-1-phosphate uridyltransferase family. In the C-terminal section; belongs to the transferase hexapeptide repeat family. In terms of assembly, homotrimer. It depends on Mg(2+) as a cofactor.

The protein localises to the cytoplasm. It carries out the reaction alpha-D-glucosamine 1-phosphate + acetyl-CoA = N-acetyl-alpha-D-glucosamine 1-phosphate + CoA + H(+). The enzyme catalyses N-acetyl-alpha-D-glucosamine 1-phosphate + UTP + H(+) = UDP-N-acetyl-alpha-D-glucosamine + diphosphate. The protein operates within nucleotide-sugar biosynthesis; UDP-N-acetyl-alpha-D-glucosamine biosynthesis; N-acetyl-alpha-D-glucosamine 1-phosphate from alpha-D-glucosamine 6-phosphate (route II): step 2/2. It participates in nucleotide-sugar biosynthesis; UDP-N-acetyl-alpha-D-glucosamine biosynthesis; UDP-N-acetyl-alpha-D-glucosamine from N-acetyl-alpha-D-glucosamine 1-phosphate: step 1/1. Its pathway is bacterial outer membrane biogenesis; LPS lipid A biosynthesis. Functionally, catalyzes the last two sequential reactions in the de novo biosynthetic pathway for UDP-N-acetylglucosamine (UDP-GlcNAc). The C-terminal domain catalyzes the transfer of acetyl group from acetyl coenzyme A to glucosamine-1-phosphate (GlcN-1-P) to produce N-acetylglucosamine-1-phosphate (GlcNAc-1-P), which is converted into UDP-GlcNAc by the transfer of uridine 5-monophosphate (from uridine 5-triphosphate), a reaction catalyzed by the N-terminal domain. The sequence is that of Bifunctional protein GlmU from Geobacillus thermodenitrificans (strain NG80-2).